Consider the following 500-residue polypeptide: Envelop protein OPG153 (500 aa).

Cys43 and Cys342 are oxidised to a cystine.

Belongs to the orthopoxvirus OPG153 protein family. As to quaternary structure, interacts with proteins OPG094 and OPG143. Interacts with OPG154. Interacts with OPG152. Interacts with host laminin.

It is found in the virion membrane. In terms of biological role, envelop protein that mediates acid-dependent endocytosis into host cells. Plays an important role in endocytic entry of the virus by acting as an acid-sensitive membrane fusion suppressor. Low pH in host endosomes triggers conformational changes to allow de-repression of viral fusion complex activity and membrane fusion within vesicles. Also plays a role in bridging the mature virion with structural protein OPG152. The protein is Envelop protein OPG153 (OPG153) of Vaccinia virus (strain Western Reserve) (VACV).